The following is a 178-amino-acid chain: Large ribosomal subunit protein uL6 (178 aa).

Belongs to the universal ribosomal protein uL6 family. As to quaternary structure, part of the 50S ribosomal subunit.

Its function is as follows. This protein binds to the 23S rRNA, and is important in its secondary structure. It is located near the subunit interface in the base of the L7/L12 stalk, and near the tRNA binding site of the peptidyltransferase center. The sequence is that of Large ribosomal subunit protein uL6 from Bacillus licheniformis (strain ATCC 14580 / DSM 13 / JCM 2505 / CCUG 7422 / NBRC 12200 / NCIMB 9375 / NCTC 10341 / NRRL NRS-1264 / Gibson 46).